Consider the following 420-residue polypeptide: Tyrosine--tRNA ligase (420 aa).

L-tyrosine is bound at residue Tyr38. The short motif at 43–52 (PTGDSLHIGH) is the 'HIGH' region element. L-tyrosine-binding residues include Tyr169 and Gln173. The 'KMSKS' region signature appears at 231–235 (KFGKS). Lys234 contacts ATP. The 67-residue stretch at 353-419 (KNIVDFLVDT…GKRKYTLVTI (67 aa)) folds into the S4 RNA-binding domain.

This sequence belongs to the class-I aminoacyl-tRNA synthetase family. TyrS type 1 subfamily. As to quaternary structure, homodimer.

The protein resides in the cytoplasm. It catalyses the reaction tRNA(Tyr) + L-tyrosine + ATP = L-tyrosyl-tRNA(Tyr) + AMP + diphosphate + H(+). Catalyzes the attachment of tyrosine to tRNA(Tyr) in a two-step reaction: tyrosine is first activated by ATP to form Tyr-AMP and then transferred to the acceptor end of tRNA(Tyr). This chain is Tyrosine--tRNA ligase, found in Lactobacillus acidophilus (strain ATCC 700396 / NCK56 / N2 / NCFM).